The sequence spans 110 residues: Guanine nucleotide-binding protein subunit gamma (110 aa).

C106 carries S-palmitoyl cysteine lipidation. C107 carries the post-translational modification Cysteine methyl ester. C107 is lipidated: S-farnesyl cysteine. A propeptide spans 108 to 110 (TLM) (removed in mature form).

The protein belongs to the G protein gamma family. As to quaternary structure, g proteins are composed of 3 units, alpha, beta and gamma. The beta-gamma subunit complex (STE4-STE18 complex) interacts with PLP1 and PLP2.

It is found in the membrane. In terms of biological role, implicated in the pheromone A- and alpha-factor response pathway. The beta and gamma chains of the putative yeast mating response pathway G protein play a positive role in initiation of the mating response. This is Guanine nucleotide-binding protein subunit gamma (STE18) from Saccharomyces cerevisiae (strain ATCC 204508 / S288c) (Baker's yeast).